Reading from the N-terminus, the 576-residue chain is FtsZ-localized protein C (576 aa).

In terms of assembly, interacts with FtsZ filaments.

It is found in the cytoplasm. Its subcellular location is the cell inner membrane. In terms of biological role, membrane anchor for FtsZ. Binds and recruits FtsZ polymers to membranes early in the cell cycle. May also improve the efficiency of cytokinesis through the regulation of cell wall hydrolysis. This Caulobacter vibrioides (strain NA1000 / CB15N) (Caulobacter crescentus) protein is FtsZ-localized protein C.